Reading from the N-terminus, the 20-residue chain is Thrombin-like enzyme okinaxobin-2 (20 aa).

One can recognise a Peptidase S1 domain in the interval 1–20 (VVGGDECNINEHRFLVALYY).

Belongs to the peptidase S1 family. Snake venom subfamily. As to quaternary structure, monomer. In terms of processing, glycosylated. Expressed by the venom gland.

The protein resides in the secreted. With respect to regulation, strongly inactivated by diisopropylfluorophosphate (DFP) and to a lesser extent by tosyl-L-lysine chloromethyl ketone (TLCK). Functionally, thrombin-like snake venom serine protease. Releases both fibrinopeptides A and B from fibrinogen (FGA and FGB) to form fibrin clots. The protein is Thrombin-like enzyme okinaxobin-2 of Ovophis okinavensis (Ryukyu Island pit viper).